A 522-amino-acid chain; its full sequence is 2-isopropylmalate synthase (522 aa).

Residues 5–267 (VIIFDTTLRD…ETGINAKEIH (263 aa)) enclose the Pyruvate carboxyltransferase domain. Mn(2+)-binding residues include Asp14, His202, His204, and Asn238. The regulatory domain stretch occupies residues 392–522 (QLQQLVVQSD…MHKNRELGGV (131 aa)).

Belongs to the alpha-IPM synthase/homocitrate synthase family. LeuA type 1 subfamily. Homodimer. Mn(2+) is required as a cofactor.

The protein localises to the cytoplasm. It catalyses the reaction 3-methyl-2-oxobutanoate + acetyl-CoA + H2O = (2S)-2-isopropylmalate + CoA + H(+). The protein operates within amino-acid biosynthesis; L-leucine biosynthesis; L-leucine from 3-methyl-2-oxobutanoate: step 1/4. Catalyzes the condensation of the acetyl group of acetyl-CoA with 3-methyl-2-oxobutanoate (2-ketoisovalerate) to form 3-carboxy-3-hydroxy-4-methylpentanoate (2-isopropylmalate). This is 2-isopropylmalate synthase from Shewanella sp. (strain ANA-3).